Consider the following 177-residue polypeptide: uncharacterized protein (177 aa).

The signal sequence occupies residues 1–22; sequence MCGVVVVIVALVPADPLLPAFA. The next 3 membrane-spanning stretches (helical) occupy residues 31–51, 94–114, and 136–156; these read VFIP…TCVF, ISLM…LKFV, and LFPI…LLEI.

Its subcellular location is the membrane. This is an uncharacterized protein from Saccharomyces cerevisiae (strain ATCC 204508 / S288c) (Baker's yeast).